Reading from the N-terminus, the 841-residue chain is Translation initiation factor IF-2 (841 aa).

The region spanning 341-508 (NRAPVVTIMG…AILLQAEILE (168 aa)) is the tr-type G domain. The G1 stretch occupies residues 350-357 (GHVDHGKT). 350–357 (GHVDHGKT) is a GTP binding site. The tract at residues 375–379 (GITQC) is G2. Residues 396–399 (DTPG) are G3. GTP contacts are provided by residues 396–400 (DTPGH) and 450–453 (NKID). The tract at residues 450 to 453 (NKID) is G4. The tract at residues 486 to 488 (SAK) is G5.

Belongs to the TRAFAC class translation factor GTPase superfamily. Classic translation factor GTPase family. IF-2 subfamily.

It localises to the cytoplasm. Functionally, one of the essential components for the initiation of protein synthesis. Protects formylmethionyl-tRNA from spontaneous hydrolysis and promotes its binding to the 30S ribosomal subunits. Also involved in the hydrolysis of GTP during the formation of the 70S ribosomal complex. The chain is Translation initiation factor IF-2 from Wigglesworthia glossinidia brevipalpis.